The primary structure comprises 121 residues: Large ribosomal subunit protein bL12 (121 aa).

The protein belongs to the bacterial ribosomal protein bL12 family. In terms of assembly, homodimer. Part of the ribosomal stalk of the 50S ribosomal subunit. Forms a multimeric L10(L12)X complex, where L10 forms an elongated spine to which 2 to 4 L12 dimers bind in a sequential fashion. Binds GTP-bound translation factors.

Its function is as follows. Forms part of the ribosomal stalk which helps the ribosome interact with GTP-bound translation factors. Is thus essential for accurate translation. The polypeptide is Large ribosomal subunit protein bL12 (Klebsiella pneumoniae (strain 342)).